A 489-amino-acid polypeptide reads, in one-letter code: Mitochondrial-processing peptidase subunit beta (489 aa).

A mitochondrion-targeting transit peptide spans Met1 to Arg43. His101 contributes to the Zn(2+) binding site. The active-site Proton acceptor is the Glu104. Zn(2+) is bound by residues His105 and Glu181.

It belongs to the peptidase M16 family. Heterodimer of PMPCA (alpha) and PMPCB (beta) subunits, forming the mitochondrial processing protease (MPP) in which PMPCA is involved in substrate recognition and binding and PMPCB is the catalytic subunit. The cofactor is Zn(2+).

It localises to the mitochondrion matrix. The catalysed reaction is Release of N-terminal transit peptides from precursor proteins imported into the mitochondrion, typically with Arg in position P2.. With respect to regulation, binding to PMPCA is required for catalytic activity. Its function is as follows. Catalytic subunit of the essential mitochondrial processing protease (MPP), which cleaves the mitochondrial sequence off newly imported precursors proteins. Preferentially, cleaves after an arginine at position P2. Required for PINK1 turnover by coupling PINK1 mitochondrial import and cleavage, which results in subsequent PINK1 proteolysis. This Homo sapiens (Human) protein is Mitochondrial-processing peptidase subunit beta (PMPCB).